We begin with the raw amino-acid sequence, 205 residues long: Inactive ribonuclease-like protein 9 (205 aa).

Residues 1 to 26 (MMRTLITTHPLPLLLLPQQLLQLVQF) form the signal peptide. 2 cysteine pairs are disulfide-bonded: C116-C168 and C123-C130. N-linked (GlcNAc...) asparagine glycans are attached at residues N131 and N143.

Belongs to the pancreatic ribonuclease family. In terms of tissue distribution, at the mRNA level, widely expressed. At protein level, restricted to epididymis. Expressed in spermatozoa (sperm head and neck), with higher levels on ejaculated and epididymal sperm than on testicular sperm (at protein level). Expressed in the epithelial cells of the epididymal tubule (at protein level). Not detected in muscle.

It localises to the secreted. Does not exhibit any ribonuclease activity. This chain is Inactive ribonuclease-like protein 9 (RNASE9), found in Homo sapiens (Human).